Here is a 427-residue protein sequence, read N- to C-terminus: MSVSFEKKETNRGVLTFTISQEQIKPELDRVFNSVKKTINVPGFRKGHLPRPVFNQKFGEEALYQDALNNLLPNAYEAAVKEAGIEVVAQPKIDVVSMEKGQDWTISAEVVTKPEVKLGAYKDLEVSVEVSKEVTDEDVDARIERERNNLAELVLKEGPAAEGDTVVIDFVGSVDGVEFDGGKGDNFSLGLGSGQFIPGFEDQLVGHKAGETVDVVVTFPEDYQAADLAGKEAKFVTTIHEVKEKEVPALDDELAKDIDEEVETLDELKEKYRKELAEGKEAAYKDAVESAAIDLAVENAEIVELPEEMVHEEVHRSVNEFLGNMQRQGISPDMYFQITGTTQEDLHKQHEADAEARTKTNLVIEAIAKAEGFEASAEEIEAEISSLANDYNMEADRVRQLLSEDMLKHDITIKKAVEVITSTAKVK.

The PPIase FKBP-type domain maps to 163–248 (GDTVVIDFVG…IHEVKEKEVP (86 aa)).

The protein belongs to the FKBP-type PPIase family. Tig subfamily.

It localises to the cytoplasm. The catalysed reaction is [protein]-peptidylproline (omega=180) = [protein]-peptidylproline (omega=0). Involved in protein export. Acts as a chaperone by maintaining the newly synthesized protein in an open conformation. Functions as a peptidyl-prolyl cis-trans isomerase. The polypeptide is Trigger factor (Streptococcus gordonii (strain Challis / ATCC 35105 / BCRC 15272 / CH1 / DL1 / V288)).